A 391-amino-acid chain; its full sequence is Solute carrier family 35 member F2 (391 aa).

The next 10 helical transmembrane spans lie at 39-59 (MLLS…IRLT), 73-93 (LFQS…TLAV), 108-128 (WWKY…VVKA), 137-157 (IQLL…FFLL), 165-185 (FIGA…DVLM), 200-220 (LIGD…SVCQ), 230-250 (VELL…QLAI), 267-287 (LLYV…PVVI), 294-314 (AINL…LFLF), and 318-338 (FSGL…FYFS). The segment at 361–391 (VELPSSGQLEPSVTYTSLSQETEEEPRVRVA) is disordered. Positions 365-380 (SSGQLEPSVTYTSLSQ) are enriched in polar residues.

This sequence belongs to the SLC35F solute transporter family.

The protein localises to the membrane. Functionally, putative solute transporter. This is Solute carrier family 35 member F2 (slc35f2) from Xenopus tropicalis (Western clawed frog).